A 441-amino-acid polypeptide reads, in one-letter code: NADH-quinone oxidoreductase subunit D 1 (441 aa).

It belongs to the complex I 49 kDa subunit family. NDH-1 is composed of 14 different subunits. Subunits NuoB, C, D, E, F, and G constitute the peripheral sector of the complex.

It localises to the cell membrane. The catalysed reaction is a quinone + NADH + 5 H(+)(in) = a quinol + NAD(+) + 4 H(+)(out). Functionally, NDH-1 shuttles electrons from NADH, via FMN and iron-sulfur (Fe-S) centers, to quinones in the respiratory chain. The immediate electron acceptor for the enzyme in this species is believed to be a menaquinone. Couples the redox reaction to proton translocation (for every two electrons transferred, four hydrogen ions are translocated across the cytoplasmic membrane), and thus conserves the redox energy in a proton gradient. In Salinispora arenicola (strain CNS-205), this protein is NADH-quinone oxidoreductase subunit D 1.